Here is a 231-residue protein sequence, read N- to C-terminus: 5'-methylthioadenosine/S-adenosylhomocysteine nucleosidase (231 aa).

The Proton acceptor role is filled by Glu-12. Substrate-binding positions include Gly-78, Met-153, and 174-175 (ME). Asp-198 (proton donor) is an active-site residue.

The protein belongs to the PNP/UDP phosphorylase family. MtnN subfamily.

The catalysed reaction is S-adenosyl-L-homocysteine + H2O = S-(5-deoxy-D-ribos-5-yl)-L-homocysteine + adenine. The enzyme catalyses S-methyl-5'-thioadenosine + H2O = 5-(methylsulfanyl)-D-ribose + adenine. It catalyses the reaction 5'-deoxyadenosine + H2O = 5-deoxy-D-ribose + adenine. It participates in amino-acid biosynthesis; L-methionine biosynthesis via salvage pathway; S-methyl-5-thio-alpha-D-ribose 1-phosphate from S-methyl-5'-thioadenosine (hydrolase route): step 1/2. Its function is as follows. Catalyzes the irreversible cleavage of the glycosidic bond in both 5'-methylthioadenosine (MTA) and S-adenosylhomocysteine (SAH/AdoHcy) to adenine and the corresponding thioribose, 5'-methylthioribose and S-ribosylhomocysteine, respectively. Also cleaves 5'-deoxyadenosine, a toxic by-product of radical S-adenosylmethionine (SAM) enzymes, into 5-deoxyribose and adenine. The sequence is that of 5'-methylthioadenosine/S-adenosylhomocysteine nucleosidase from Psychromonas ingrahamii (strain DSM 17664 / CCUG 51855 / 37).